Consider the following 172-residue polypeptide: 3-hydroxydecanoyl-[acyl-carrier-protein] dehydratase (172 aa).

H71 is an active-site residue.

Belongs to the thioester dehydratase family. FabA subfamily. Homodimer.

The protein resides in the cytoplasm. The enzyme catalyses a (3R)-hydroxyacyl-[ACP] = a (2E)-enoyl-[ACP] + H2O. It carries out the reaction (3R)-hydroxydecanoyl-[ACP] = (2E)-decenoyl-[ACP] + H2O. It catalyses the reaction (2E)-decenoyl-[ACP] = (3Z)-decenoyl-[ACP]. The protein operates within lipid metabolism; fatty acid biosynthesis. In terms of biological role, necessary for the introduction of cis unsaturation into fatty acids. Catalyzes the dehydration of (3R)-3-hydroxydecanoyl-ACP to E-(2)-decenoyl-ACP and then its isomerization to Z-(3)-decenoyl-ACP. Can catalyze the dehydratase reaction for beta-hydroxyacyl-ACPs with saturated chain lengths up to 16:0, being most active on intermediate chain length. This chain is 3-hydroxydecanoyl-[acyl-carrier-protein] dehydratase, found in Klebsiella pneumoniae subsp. pneumoniae (strain ATCC 700721 / MGH 78578).